A 287-amino-acid polypeptide reads, in one-letter code: Mitochondrial dicarboxylate carrier (287 aa).

3 Solcar repeats span residues 8-88 (SRWY…VRDR), 101-188 (EKVL…AKQL), and 197-280 (DNIF…LRKN). 6 consecutive transmembrane segments (helical) span residues 10–30 (WYFG…LDLL), 63–82 (GLSA…FAIY), 103–123 (VLLG…ADLV), 163–182 (GATM…LSCY), 203–223 (FVAS…LDVL), and 255–275 (GLVP…VFLE).

It belongs to the mitochondrial carrier (TC 2.A.29) family. In terms of tissue distribution, present in high amounts in liver and kidney, and at lower levels in all the other tissues analyzed.

It localises to the mitochondrion inner membrane. The catalysed reaction is (S)-malate(in) + phosphate(out) = (S)-malate(out) + phosphate(in). It carries out the reaction malonate(out) + (S)-malate(in) = malonate(in) + (S)-malate(out). The enzyme catalyses (S)-malate(in) + succinate(out) = (S)-malate(out) + succinate(in). It catalyses the reaction (S)-malate(in) + sulfate(out) = (S)-malate(out) + sulfate(in). The catalysed reaction is malonate(out) + phosphate(in) = malonate(in) + phosphate(out). It carries out the reaction succinate(out) + phosphate(in) = succinate(in) + phosphate(out). The enzyme catalyses sulfate(out) + phosphate(in) = sulfate(in) + phosphate(out). It catalyses the reaction malonate(out) + succinate(in) = malonate(in) + succinate(out). Catalyzes the electroneutral exchange or flux of physiologically important metabolites such as dicarboxylates (malonate, malate, succinate), inorganic sulfur-containing anions, and phosphate, across mitochondrial inner membrane. Plays an important role in gluconeogenesis, fatty acid metabolism, urea synthesis, and sulfur metabolism, particularly in liver, by supplying the substrates for the different metabolic processes. Regulates fatty acid release from adipocytes, and contributes to systemic insulin sensitivity. This chain is Mitochondrial dicarboxylate carrier (SLC25A10), found in Homo sapiens (Human).